Consider the following 670-residue polypeptide: tRNA 5-methylaminomethyl-2-thiouridine biosynthesis bifunctional protein MnmC (670 aa).

Residues 1-245 (MKPIAIQPAS…KREMLTGALS (245 aa)) form a tRNA (mnm(5)s(2)U34)-methyltransferase region. The FAD-dependent cmnm(5)s(2)U34 oxidoreductase stretch occupies residues 271–670 (VGGGIASALL…RKLLKGRAAS (400 aa)).

The protein in the N-terminal section; belongs to the methyltransferase superfamily. tRNA (mnm(5)s(2)U34)-methyltransferase family. In the C-terminal section; belongs to the DAO family. It depends on FAD as a cofactor.

The protein localises to the cytoplasm. It carries out the reaction 5-aminomethyl-2-thiouridine(34) in tRNA + S-adenosyl-L-methionine = 5-methylaminomethyl-2-thiouridine(34) in tRNA + S-adenosyl-L-homocysteine + H(+). Functionally, catalyzes the last two steps in the biosynthesis of 5-methylaminomethyl-2-thiouridine (mnm(5)s(2)U) at the wobble position (U34) in tRNA. Catalyzes the FAD-dependent demodification of cmnm(5)s(2)U34 to nm(5)s(2)U34, followed by the transfer of a methyl group from S-adenosyl-L-methionine to nm(5)s(2)U34, to form mnm(5)s(2)U34. In Cronobacter sakazakii (strain ATCC BAA-894) (Enterobacter sakazakii), this protein is tRNA 5-methylaminomethyl-2-thiouridine biosynthesis bifunctional protein MnmC.